Consider the following 201-residue polypeptide: Small ribosomal subunit protein uS4c (201 aa).

Positions 15 to 45 (LGDLPGLSRKAIKRSYPPGEHGQKSRKPSEY) are disordered. Positions 35–45 (HGQKSRKPSEY) are enriched in basic and acidic residues. The S4 RNA-binding domain occupies 90–153 (MRLDNTVFRL…ASRKLVENYL (64 aa)).

Belongs to the universal ribosomal protein uS4 family. Part of the 30S ribosomal subunit. Contacts protein S5. The interaction surface between S4 and S5 is involved in control of translational fidelity.

The protein localises to the plastid. Its subcellular location is the chloroplast. Functionally, one of the primary rRNA binding proteins, it binds directly to 16S rRNA where it nucleates assembly of the body of the 30S subunit. In terms of biological role, with S5 and S12 plays an important role in translational accuracy. This Pyropia yezoensis (Susabi-nori) protein is Small ribosomal subunit protein uS4c (rps4).